Here is a 607-residue protein sequence, read N- to C-terminus: MPRKKPFSVKQKKKQLQDKRERKRGLQDGLRSSSNSRSGSRERREEQTDTSDGESVTHHIRRLNQQPSQGLGPRGYDPNRYRLHFERDSREEVERRKRAAREQVLQPVSAEVLELDIREVYQPGSVLDFPRRPPWSYEMSKEQLMSQEERSFQEYLGKIHGAYSSEKLSYFEHNLETWRQLWRVLEMSDIVLLITDIRHPVVNFPPALYEYVTGELGLALVLVLNKVDLAPPALVVAWKHYFHQHYPQLHVVLFTSFPRDPRTPQDPSSVLKKSRRRGRGWTRALGPEQLLRACEAITVGKVDLSSWREKIARDVAGATWGNGSGEEEEEDDGPAVLVEQQTDSAMEPTGPTRERYKDGVVTIGCVGFPNVGKSSLINGLVGRKVVSVSRTPGHTRYFQTYFLTPSVKLCDCPGLIFPSLLPRQLQVLAGIYPIAQIQEPYTAVGYLASRIPVQALLHLRHPEAEDPSAEHPWCAWDICEAWAEKRGYKTAKAARNDVYRAANSLLRLAVDGRLSLCFHPPGYSEQKGTWESHPETTELVVLQGRVGPAGDEEEEEEEELSSSCEEEGEEDRDADEEGEGDEDTPTSAPGSSLAGRNPYALLGEDEC.

Basic residues predominate over residues 1 to 14 (MPRKKPFSVKQKKK). The interval 1-81 (MPRKKPFSVK…GPRGYDPNRY (81 aa)) is disordered. Residues 15-26 (QLQDKRERKRGL) are compositionally biased toward basic and acidic residues. A phosphoserine mark is found at Ser32, Ser33, and Ser34. Residues Thr48 and Thr50 each carry the phosphothreonine modification. A phosphoserine mark is found at Ser51 and Ser68. The CP-type G domain maps to 178–418 (WRQLWRVLEM…LCDCPGLIFP (241 aa)). GTP is bound at residue 225 to 228 (NKVD). Ser324 bears the Phosphoserine mark. Residues 367-374 (GFPNVGKS) and 411-415 (DCPGL) each bind GTP. A disordered region spans residues 547–607 (GPAGDEEEEE…PYALLGEDEC (61 aa)). The span at 550–584 (GDEEEEEEEELSSSCEEEGEEDRDADEEGEGDEDT) shows a compositional bias: acidic residues. Phosphoserine occurs at positions 561, 562, and 563.

The protein belongs to the TRAFAC class YlqF/YawG GTPase family.

Its function is as follows. Possible regulatory or functional link with the histocompatibility cluster. The chain is Guanine nucleotide-binding protein-like 1 (GNL1) from Macaca fascicularis (Crab-eating macaque).